A 360-amino-acid polypeptide reads, in one-letter code: Magnesium-protoporphyrin IX monomethyl ester [oxidative] cyclase (360 aa).

The interval 1–20 (MVPPTAIAEASRSGGEPAIK) is disordered.

This sequence belongs to the AcsF family. Fe cation serves as cofactor.

The enzyme catalyses Mg-protoporphyrin IX 13-monomethyl ester + 3 NADPH + 3 O2 + 2 H(+) = 3,8-divinyl protochlorophyllide a + 3 NADP(+) + 5 H2O. It participates in porphyrin-containing compound metabolism; chlorophyll biosynthesis (light-independent). Functionally, catalyzes the formation of the isocyclic ring in chlorophyll biosynthesis. Mediates the cyclase reaction, which results in the formation of divinylprotochlorophyllide (Pchlide) characteristic of all chlorophylls from magnesium-protoporphyrin IX 13-monomethyl ester (MgPMME). The protein is Magnesium-protoporphyrin IX monomethyl ester [oxidative] cyclase of Synechococcus sp. (strain RCC307).